The sequence spans 309 residues: DNA replication terminus site-binding protein (309 aa).

This sequence belongs to the Tus family.

The protein localises to the cytoplasm. In terms of biological role, trans-acting protein required for termination of DNA replication. Binds to DNA replication terminator sequences (terA to terF) to prevent the passage of replication forks. The termination efficiency will be affected by the affinity of this protein for the terminator sequence. The protein is DNA replication terminus site-binding protein of Yersinia enterocolitica serotype O:8 / biotype 1B (strain NCTC 13174 / 8081).